Consider the following 176-residue polypeptide: Small ribosomal subunit protein uS5 (176 aa).

The S5 DRBM domain occupies 11-74 (LSEVLVDVNR…QAAKKRMMKV (64 aa)).

The protein belongs to the universal ribosomal protein uS5 family. Part of the 30S ribosomal subunit. Contacts proteins S4 and S8.

In terms of biological role, with S4 and S12 plays an important role in translational accuracy. Functionally, located at the back of the 30S subunit body where it stabilizes the conformation of the head with respect to the body. This is Small ribosomal subunit protein uS5 from Rickettsia conorii (strain ATCC VR-613 / Malish 7).